A 305-amino-acid polypeptide reads, in one-letter code: MVDKLTHLKQLEAESIHIIREVAAEFDNPVMLYSIGKDSAVMLHLARKAFFPGKLPFPVMHVDTRWKFQEMYRFRDKMVEEMGLDLITHINPDGVAQGINPFTHGSAKHTDIMKTEGLKQALDKHGFDAAFGGARRDEEKSRAKERVYSFRDSKHRWDPKNQRPELWNVYNGNVNKGESIRVFPLSNWTELDIWQYIYLEGIPIVPLYFAAERDVIEKNGTLIMIDDERILEHLTDEEKSRIVKKKVRFRTLGCYPLTGAVESEATSLTDIIQEMLLTRTSERQGRVIDHDGAGSMEEKKRQGYF.

Belongs to the PAPS reductase family. CysD subfamily. In terms of assembly, heterodimer composed of CysD, the smaller subunit, and CysN.

The enzyme catalyses sulfate + ATP + H(+) = adenosine 5'-phosphosulfate + diphosphate. It participates in sulfur metabolism; hydrogen sulfide biosynthesis; sulfite from sulfate: step 1/3. In terms of biological role, with CysN forms the ATP sulfurylase (ATPS) that catalyzes the adenylation of sulfate producing adenosine 5'-phosphosulfate (APS) and diphosphate, the first enzymatic step in sulfur assimilation pathway. APS synthesis involves the formation of a high-energy phosphoric-sulfuric acid anhydride bond driven by GTP hydrolysis by CysN coupled to ATP hydrolysis by CysD. The chain is Sulfate adenylyltransferase subunit 2 from Pseudomonas savastanoi pv. phaseolicola (strain 1448A / Race 6) (Pseudomonas syringae pv. phaseolicola (strain 1448A / Race 6)).